The sequence spans 608 residues: MQFQTEVNQLLQLMIHSLYSNKEIFLRELISNASDALDKLNFLSVSDDKYKSLKFEPKIEIKIDKDKKTLSISDNGIGMDKDDLINNLGTIAKSGTKSFLENLSGDAKKDSQLIGQFGVGFYSAFMVASKIEVLSKKALDDKAYLWSSDANGYEINDANKEEQGTSITLYLKDDEFANTYKIESIIEKYSNHIQFPIFMEKEEFTPAKEGEEEGKTELKISQINKANALWRMQKSSLKVEDYERFYEQNFHDSNKPLLYLHTKSEGKLEYNSLFFIPQNAPFDLFRVDYQSGLKLYVKRVFISDDDKELLPTYLRFVRGIIDVEDLPLNVSREILQENQILKGVKEASVKKILGELEKLKNNDKEKYLSFFKTFGKVLKEGLYGFGGEKDSLLKLMLYKSTKGENLRSLEEYKNDLQGEQKEIFYIAGNNESLLRTSPLLEEYKQKNIEVLLMDDEIDSLVTPMLEFEGLKFVAINQVEDKNELSDEEKNTFAPLVAKFKELLKDQVEDVRLTSRLKDSPSCIVYDKNKPDFAMQQLLKQMGQEQNFKPILEINPKHAIFTGLKNNESFSADIATLVLNMAKLSEGMGVDNPAEFNASLTKIINKAFS.

The segment at 1–332 (MQFQTEVNQL…VEDLPLNVSR (332 aa)) is a; substrate-binding. Residues 333 to 536 (EILQENQILK…KNKPDFAMQQ (204 aa)) are b. The interval 537 to 608 (LLKQMGQEQN…LTKIINKAFS (72 aa)) is c.

This sequence belongs to the heat shock protein 90 family. In terms of assembly, homodimer.

The protein resides in the cytoplasm. Molecular chaperone. Has ATPase activity. In Campylobacter jejuni subsp. jejuni serotype O:6 (strain 81116 / NCTC 11828), this protein is Chaperone protein HtpG.